Consider the following 109-residue polypeptide: uncharacterized protein (109 aa).

Helical transmembrane passes span 24–44 (SLGI…SAFV) and 68–88 (VIVL…SIFI).

The protein localises to the membrane. This is an uncharacterized protein from Saccharomyces cerevisiae (strain ATCC 204508 / S288c) (Baker's yeast).